A 383-amino-acid polypeptide reads, in one-letter code: Pantothenate kinase 1 (383 aa).

The protein belongs to the type II pantothenate kinase family. Highly expressed in leaves and developing seeds. Expressed in roots, stems and flowers.

It carries out the reaction (R)-pantothenate + ATP = (R)-4'-phosphopantothenate + ADP + H(+). It participates in cofactor biosynthesis; coenzyme A biosynthesis; CoA from (R)-pantothenate: step 1/5. Its activity is regulated as follows. Regulated by feedback inhibition by malonyl-CoA. Functionally, catalyzes the phosphorylation of pantothenate the first step in CoA biosynthesis. May play a role in the physiological regulation of the intracellular CoA concentration. Functionally redudant with PANK2. This chain is Pantothenate kinase 1 (PANK1), found in Arabidopsis thaliana (Mouse-ear cress).